Consider the following 419-residue polypeptide: uncharacterized protein (419 aa).

This is an uncharacterized protein from Caenorhabditis elegans.